Here is a 139-residue protein sequence, read N- to C-terminus: Large ribosomal subunit protein uL16 (139 aa).

It belongs to the universal ribosomal protein uL16 family. Part of the 50S ribosomal subunit.

Its function is as follows. Binds 23S rRNA and is also seen to make contacts with the A and possibly P site tRNAs. This chain is Large ribosomal subunit protein uL16, found in Prosthecochloris aestuarii (strain DSM 271 / SK 413).